The following is a 244-amino-acid chain: MFELTGRKALVTGASGAIGGAIARVLHAQGAIVGLHGTQMKNWRHWQLSLETGSSCSRLIWPIETKSRRLVRERKPILKASTSWSTNAGITKDGLFLHMADPDWDIVLEVNLTAMFRLTREITQQMIRRRNGRIINVTSVAGAIGNPGQTNYCASKAGMIGFSKSWRRRSTRNITVNCVAPGFIESAMTDKLNHKQKEKIMVAIPIHRMGTGTEVASAVAYLASDHAAYVTGQTIHVNGGMAMI.

Residue 11-35 participates in NAD(+) binding; that stretch reads VTGASGAIGGAIARVLHAQGAIVGL. A substrate-binding site is contributed by S139. Y152 acts as the Proton acceptor in catalysis.

Belongs to the short-chain dehydrogenases/reductases (SDR) family.

Functionally, proposed to modify Nod factor fatty acyl chain. This chain is Nodulation protein G (nodG), found in Rhizobium meliloti (Ensifer meliloti).